Here is a 149-residue protein sequence, read N- to C-terminus: Protein FAM72C (149 aa).

The protein belongs to the FAM72 family.

In Homo sapiens (Human), this protein is Protein FAM72C (FAM72C).